An 85-amino-acid polypeptide reads, in one-letter code: MKVTLIAILTCAAVLVLHTTAAEELEAESQLMEVGMPDTELAAVDEERLFECSVSCEIEKEGNKDCKKKKCKGGWKCKFNMCVKV.

A signal peptide spans 1 to 22 (MKVTLIAILTCAAVLVLHTTAA). The propeptide occupies 23-48 (EELEAESQLMEVGMPDTELAAVDEER). 3 disulfides stabilise this stretch: C52/C66, C56/C77, and C71/C82.

This sequence belongs to the neurotoxin 12 (Hwtx-2) family. 02 (Hwtx-2) subfamily. In terms of assembly, monomer. Expressed by the venom gland.

The protein localises to the secreted. Functionally, neurotoxin active on both insects and mammals. This Cyriopagopus hainanus (Chinese bird spider) protein is U4-theraphotoxin-Hhn1a.